A 155-amino-acid polypeptide reads, in one-letter code: 6,7-dimethyl-8-ribityllumazine synthase (155 aa).

5-amino-6-(D-ribitylamino)uracil is bound by residues Phe-23, 57–59 (AFE), and 83–85 (AVI). 88–89 (AT) serves as a coordination point for (2S)-2-hydroxy-3-oxobutyl phosphate. Catalysis depends on His-91, which acts as the Proton donor. Phe-114 is a binding site for 5-amino-6-(D-ribitylamino)uracil. Position 128 (Arg-128) interacts with (2S)-2-hydroxy-3-oxobutyl phosphate.

It belongs to the DMRL synthase family.

The enzyme catalyses (2S)-2-hydroxy-3-oxobutyl phosphate + 5-amino-6-(D-ribitylamino)uracil = 6,7-dimethyl-8-(1-D-ribityl)lumazine + phosphate + 2 H2O + H(+). The protein operates within cofactor biosynthesis; riboflavin biosynthesis; riboflavin from 2-hydroxy-3-oxobutyl phosphate and 5-amino-6-(D-ribitylamino)uracil: step 1/2. Functionally, catalyzes the formation of 6,7-dimethyl-8-ribityllumazine by condensation of 5-amino-6-(D-ribitylamino)uracil with 3,4-dihydroxy-2-butanone 4-phosphate. This is the penultimate step in the biosynthesis of riboflavin. This is 6,7-dimethyl-8-ribityllumazine synthase from Leptospira biflexa serovar Patoc (strain Patoc 1 / Ames).